Here is a 2292-residue protein sequence, read N- to C-terminus: Protein Ycf2 (2292 aa).

1644 to 1651 (GSIGTGRS) contributes to the ATP binding site.

It belongs to the Ycf2 family.

It localises to the plastid. The protein resides in the chloroplast stroma. In terms of biological role, probable ATPase of unknown function. Its presence in a non-photosynthetic plant (Epifagus virginiana) and experiments in tobacco indicate that it has an essential function which is probably not related to photosynthesis. In Morus indica (Mulberry), this protein is Protein Ycf2.